We begin with the raw amino-acid sequence, 405 residues long: Acetate kinase (405 aa).

Residue Asn-7 coordinates Mg(2+). Lys-14 serves as a coordination point for ATP. A substrate-binding site is contributed by Arg-92. Asp-149 functions as the Proton donor/acceptor in the catalytic mechanism. ATP is bound by residues 209-213 and 284-286; these read HLGNG and DMR. Glu-389 is a Mg(2+) binding site.

Belongs to the acetokinase family. In terms of assembly, homodimer. The cofactor is Mg(2+). Mn(2+) serves as cofactor.

The protein localises to the cytoplasm. The catalysed reaction is acetate + ATP = acetyl phosphate + ADP. It participates in metabolic intermediate biosynthesis; acetyl-CoA biosynthesis; acetyl-CoA from acetate: step 1/2. Functionally, catalyzes the formation of acetyl phosphate from acetate and ATP. Can also catalyze the reverse reaction. The chain is Acetate kinase from Borrelia garinii subsp. bavariensis (strain ATCC BAA-2496 / DSM 23469 / PBi) (Borreliella bavariensis).